Here is a 186-residue protein sequence, read N- to C-terminus: Adenine phosphoribosyltransferase (186 aa).

The protein belongs to the purine/pyrimidine phosphoribosyltransferase family. Homodimer.

It localises to the cytoplasm. The catalysed reaction is AMP + diphosphate = 5-phospho-alpha-D-ribose 1-diphosphate + adenine. It participates in purine metabolism; AMP biosynthesis via salvage pathway; AMP from adenine: step 1/1. Catalyzes a salvage reaction resulting in the formation of AMP, that is energically less costly than de novo synthesis. This chain is Adenine phosphoribosyltransferase, found in Sulfurovum sp. (strain NBC37-1).